The sequence spans 436 residues: Trigger factor (436 aa).

Residues 161–246 form the PPIase FKBP-type domain; sequence GMRVTMDFVG…LNKVEEQILP (86 aa).

The protein belongs to the FKBP-type PPIase family. Tig subfamily.

The protein localises to the cytoplasm. The catalysed reaction is [protein]-peptidylproline (omega=180) = [protein]-peptidylproline (omega=0). Involved in protein export. Acts as a chaperone by maintaining the newly synthesized protein in an open conformation. Functions as a peptidyl-prolyl cis-trans isomerase. This chain is Trigger factor, found in Aeromonas hydrophila subsp. hydrophila (strain ATCC 7966 / DSM 30187 / BCRC 13018 / CCUG 14551 / JCM 1027 / KCTC 2358 / NCIMB 9240 / NCTC 8049).